The following is an 827-amino-acid chain: Leucine--tRNA ligase (827 aa).

Positions 42 to 52 (PYPSGNLHMGH) match the 'HIGH' region motif. The short motif at 583–587 (KMSKS) is the 'KMSKS' region element. Lys-586 contributes to the ATP binding site.

The protein belongs to the class-I aminoacyl-tRNA synthetase family.

Its subcellular location is the cytoplasm. It carries out the reaction tRNA(Leu) + L-leucine + ATP = L-leucyl-tRNA(Leu) + AMP + diphosphate. The protein is Leucine--tRNA ligase of Desulfitobacterium hafniense (strain DSM 10664 / DCB-2).